Consider the following 136-residue polypeptide: Cytidine deaminase (136 aa).

Positions 1–128 constitute a CMP/dCMP-type deaminase domain; it reads MDVEKLIAES…KLLPGAFSKE (128 aa). 42–44 contributes to the substrate binding site; the sequence is NIE. C53 is a binding site for Zn(2+). E55 acts as the Proton donor in catalysis. Positions 86 and 89 each coordinate Zn(2+).

The protein belongs to the cytidine and deoxycytidylate deaminase family. Zn(2+) serves as cofactor.

The catalysed reaction is cytidine + H2O + H(+) = uridine + NH4(+). It catalyses the reaction 2'-deoxycytidine + H2O + H(+) = 2'-deoxyuridine + NH4(+). In terms of biological role, this enzyme scavenges exogenous and endogenous cytidine and 2'-deoxycytidine for UMP synthesis. This Sporosarcina psychrophila (Bacillus psychrophilus) protein is Cytidine deaminase (cdd).